A 680-amino-acid polypeptide reads, in one-letter code: Epithelial splicing regulatory protein 1 (680 aa).

3 RRM domains span residues 224–301 (TVVR…KATG), 325–405 (VIVR…RSTA), and 444–524 (DCIR…QCSA). Phosphoserine is present on Ser542. Arg581 carries the post-translational modification Omega-N-methylarginine.

This sequence belongs to the ESRP family. In terms of tissue distribution, epithelial cell-specific. Epithelial-specific expression in diverse tissues and organs with particularly notable levels of expression in skin and gastrointestinal epithelia.

Its subcellular location is the nucleus. Its function is as follows. mRNA splicing factor that regulates the formation of epithelial cell-specific isoforms. Specifically regulates the expression of FGFR2-IIIb, an epithelial cell-specific isoform of FGFR2. Also regulates the splicing of CD44, CTNND1, ENAH, 3 transcripts that undergo changes in splicing during the epithelial-to-mesenchymal transition (EMT). Acts by directly binding specific sequences in mRNAs. Binds the GU-rich sequence motifs in the ISE/ISS-3, a cis-element regulatory region present in the mRNA of FGFR2. Regulates splicing and expression of genes involved in inner ear development, auditory hair cell differentiation, and cell fate specification in the cochlear epithelium. The sequence is that of Epithelial splicing regulatory protein 1 (Esrp1) from Mus musculus (Mouse).